Consider the following 201-residue polypeptide: Ras-related protein Rab-1B (201 aa).

An N-acetylmethionine modification is found at M1. S17, G18, V19, G20, K21, S22, C23, Y33, T34, E35, S36, S39, and T40 together coordinate GTP. S22 serves as a coordination point for Mg(2+). A Switch 1 motif is present at residues 30-45 (DDTYTESYISTIGVDF). Residues T40 and D63 each coordinate Mg(2+). Positions 64-83 (TAGQERFRTITSSYYRGAHG) are switch 2 region; Required for interaction with REP1/CHM. Positions 65–80 (AGQERFRTITSSYYRG) match the Switch 2 motif. GTP is bound by residues G66, N121, K122, D124, S151, A152, and K153. A disordered region spans residues 173–201 (MGPGAASGGERPNLKIDSTPVKQAGGGCC). 2 S-geranylgeranyl cysteine lipidation sites follow: C200 and C201. C201 is subject to Cysteine methyl ester.

It belongs to the small GTPase superfamily. Rab family. Interacts with MICAL1 and MICAL2. Interacts (in GTP-bound form) with MICALCL, MICAL1 and MILCAL3. Interacts with GDI1; the interaction requires the GDP-bound state. Interacts with CHM/REP1; the interaction requires the GDP-bound form and is necessary for prenylation by GGTase II. Interacts with RabGAP TBC1D20. Interacts (in GDP-bound form) with lipid phosphatase MTMR6 (via GRAM domain); the interaction regulates MTMR6 recruitment to the endoplasmic reticulum-Golgi intermediate compartment. Interacts (in GDP-bound form) with lipid phosphatase MTMR7. Requires Mg(2+) as cofactor. Prenylated; by GGTase II, only after interaction of the substrate with Rab escort protein 1 (REP1).

It localises to the cytoplasm. The protein resides in the membrane. It is found in the preautophagosomal structure membrane. Its subcellular location is the perinuclear region. It catalyses the reaction GTP + H2O = GDP + phosphate + H(+). Its activity is regulated as follows. Regulated by guanine nucleotide exchange factors (GEFs) which promote the exchange of bound GDP for free GTP. Regulated by GTPase activating proteins (GAPs) including TBC1D20 which increases the GTP hydrolysis activity. Inhibited by GDP dissociation inhibitors (GDIs). The small GTPases Rab are key regulators of intracellular membrane trafficking, from the formation of transport vesicles to their fusion with membranes. Rabs cycle between an inactive GDP-bound form and an active GTP-bound form that is able to recruit to membranes different set of downstream effectors directly responsible for vesicle formation, movement, tethering and fusion. Plays a role in the initial events of the autophagic vacuole development which take place at specialized regions of the endoplasmic reticulum. Regulates vesicular transport between the endoplasmic reticulum and successive Golgi compartments. Required to modulate the compacted morphology of the Golgi. Promotes the recruitment of lipid phosphatase MTMR6 to the endoplasmic reticulum-Golgi intermediate compartment. The protein is Ras-related protein Rab-1B (RAB1B) of Bos taurus (Bovine).